The sequence spans 82 residues: Delta-actitoxin-Aeq2c (82 aa).

An N-terminal signal peptide occupies residues 1–19; sequence MNRLMILVFAAVFLALASA. The propeptide occupies 20-26; that stretch reads DEDVDIA. Intrachain disulfides connect cysteine 32–cysteine 79, cysteine 34–cysteine 69, and cysteine 62–cysteine 80.

The protein belongs to the sea anemone sodium channel inhibitory toxin family. Type I subfamily.

The protein resides in the secreted. It localises to the nematocyst. Functionally, binds specifically to voltage-gated sodium channels (Nav), thereby delaying their inactivation during signal transduction. Causes death to crabs. The sequence is that of Delta-actitoxin-Aeq2c from Actinia equina (Beadlet anemone).